The sequence spans 466 residues: Glutamate--tRNA ligase 1 (466 aa).

Positions proline 9–asparagine 19 match the 'HIGH' region motif. The 'KMSKS' region motif lies at lysine 238–arginine 242. Lysine 241 is a binding site for ATP.

Belongs to the class-I aminoacyl-tRNA synthetase family. Glutamate--tRNA ligase type 1 subfamily. Monomer.

It localises to the cytoplasm. The catalysed reaction is tRNA(Glu) + L-glutamate + ATP = L-glutamyl-tRNA(Glu) + AMP + diphosphate. In terms of biological role, catalyzes the attachment of glutamate to tRNA(Glu) in a two-step reaction: glutamate is first activated by ATP to form Glu-AMP and then transferred to the acceptor end of tRNA(Glu). The protein is Glutamate--tRNA ligase 1 of Gluconacetobacter diazotrophicus (strain ATCC 49037 / DSM 5601 / CCUG 37298 / CIP 103539 / LMG 7603 / PAl5).